The primary structure comprises 736 residues: Oligopeptide transporter 6 (736 aa).

A run of 15 helical transmembrane segments spans residues 43-63 (MWVLGIGACIVLSFINQFFWY), 66-86 (MPLSITGISAQIAVVPLGHLM), 116-136 (VLITIFANSGAGSVYATHILS), 148-168 (FLPAFLVMITTQILGFGWAGL), 210-230 (FFLIVLVASFAYYIFPGYLFT), 258-278 (LGIGSIGFDWVTISAYLGSPL), 288-308 (VAIGFVLVMYIVTPVCYWLNI), 357-377 (FFAVTYGLGFATLSATIVHVL), 412-432 (VPLWWFLVILLLNIALIMFIS), 443-463 (WWGVLLACAIAISFTPLIGVI), 489-511 (PVANMCFKVYGYISMTQALTFIS), 527-547 (FMAQVAGTLVAVVVYTGTAWW), 602-622 (WFFLVGAIAPLLVWLATKMFP), 645-665 (ATAVNFTSWLIVAFIFGHFIF), and 678-698 (VLSGGLDAGSAFMTILLFLAL).

This sequence belongs to the oligopeptide OPT transporter (TC 2.A.67.1) family. Expressed in flowers and roots, and at a low level in leaves and stems. Detected in the cambial zone of the vascular bundles and in the region of lateral root initiation. Low expression in the vascular network of the petals and high in the stamen filaments and the gynoecium.

The protein localises to the membrane. Its function is as follows. Involved in the translocation of tetra- and pentapeptides across the cellular membrane in an energy-dependent manner. Also involved in transport of glutathione derivatives and metal complexes, and may be involved in stress resistance. In Arabidopsis thaliana (Mouse-ear cress), this protein is Oligopeptide transporter 6 (OPT6).